The following is a 531-amino-acid chain: Transcription termination/antitermination protein NusA (531 aa).

The S1 motif domain maps to 165-235 (GEVIEAKVED…SLWPITLSRS (71 aa)). The 71-residue stretch at 340-410 (DTSIEVVVPA…FGIKKRREKI (71 aa)) folds into the KH domain. The segment covering 463–475 (EKQVTPKEKEKVQ) has biased composition (basic and acidic residues). The disordered stretch occupies residues 463-531 (EKQVTPKEKE…KQTFDSFDDL (69 aa)). Residues 476-490 (PKAKVHSNSHSKKPA) are compositionally biased toward basic residues. Residues 502–512 (ASDKNLKKDQV) are compositionally biased toward basic and acidic residues. Residues 513-531 (DNNQTNPQTKQTFDSFDDL) show a composition bias toward polar residues.

It belongs to the NusA family. As to quaternary structure, monomer. Binds directly to the core enzyme of the DNA-dependent RNA polymerase and to nascent RNA.

Its subcellular location is the cytoplasm. Functionally, participates in both transcription termination and antitermination. This Mycoplasma genitalium (strain ATCC 33530 / DSM 19775 / NCTC 10195 / G37) (Mycoplasmoides genitalium) protein is Transcription termination/antitermination protein NusA.